We begin with the raw amino-acid sequence, 165 residues long: Leukotoxin-activating lysine-acyltransferase LktC (165 aa).

Catalysis depends on residues His-22 and Asp-91.

The protein belongs to the RTX toxin acyltransferase family.

It localises to the cytoplasm. It carries out the reaction a fatty acyl-[ACP] + L-lysyl-[protein] = N(6)-(fatty acyl)-L-lysyl-[protein] + holo-[ACP] + H(+). Functionally, involved in fatty acylation of the protoxin (LktA) at two internal lysine residues, thereby converting it to the active toxin. This Pasteurella haemolytica-like sp. (strain 5943B) protein is Leukotoxin-activating lysine-acyltransferase LktC (lktC).